The following is an 82-amino-acid chain: ATP synthase subunit c (82 aa).

A run of 2 helical transmembrane segments spans residues Leu-6 to Ile-26 and Ile-49 to Val-69.

Belongs to the ATPase C chain family. F-type ATPases have 2 components, F(1) - the catalytic core - and F(0) - the membrane proton channel. F(1) has five subunits: alpha(3), beta(3), gamma(1), delta(1), epsilon(1). F(0) has three main subunits: a(1), b(2) and c(10-14). The alpha and beta chains form an alternating ring which encloses part of the gamma chain. F(1) is attached to F(0) by a central stalk formed by the gamma and epsilon chains, while a peripheral stalk is formed by the delta and b chains.

Its subcellular location is the cell inner membrane. F(1)F(0) ATP synthase produces ATP from ADP in the presence of a proton or sodium gradient. F-type ATPases consist of two structural domains, F(1) containing the extramembraneous catalytic core and F(0) containing the membrane proton channel, linked together by a central stalk and a peripheral stalk. During catalysis, ATP synthesis in the catalytic domain of F(1) is coupled via a rotary mechanism of the central stalk subunits to proton translocation. In terms of biological role, key component of the F(0) channel; it plays a direct role in translocation across the membrane. A homomeric c-ring of between 10-14 subunits forms the central stalk rotor element with the F(1) delta and epsilon subunits. This Nitratidesulfovibrio vulgaris (strain ATCC 29579 / DSM 644 / CCUG 34227 / NCIMB 8303 / VKM B-1760 / Hildenborough) (Desulfovibrio vulgaris) protein is ATP synthase subunit c.